The following is a 248-amino-acid chain: Adenosylcobinamide-GDP ribazoletransferase (248 aa).

The next 8 helical transmembrane spans lie at 3 to 23 (ELKA…PINI), 35 to 55 (SYFP…YLLL), 63 to 83 (IVMT…HIDG), 109 to 129 (LGTN…LFLS), 135 to 155 (LLFS…VFSI), 180 to 199 (FVIA…PLKD), 200 to 219 (LALL…KYIS), and 228 to 248 (DTLG…FSIL).

This sequence belongs to the CobS family. Mg(2+) is required as a cofactor.

The protein resides in the cell membrane. It catalyses the reaction alpha-ribazole + adenosylcob(III)inamide-GDP = adenosylcob(III)alamin + GMP + H(+). The catalysed reaction is alpha-ribazole 5'-phosphate + adenosylcob(III)inamide-GDP = adenosylcob(III)alamin 5'-phosphate + GMP + H(+). It functions in the pathway cofactor biosynthesis; adenosylcobalamin biosynthesis; adenosylcobalamin from cob(II)yrinate a,c-diamide: step 7/7. Joins adenosylcobinamide-GDP and alpha-ribazole to generate adenosylcobalamin (Ado-cobalamin). Also synthesizes adenosylcobalamin 5'-phosphate from adenosylcobinamide-GDP and alpha-ribazole 5'-phosphate. The polypeptide is Adenosylcobinamide-GDP ribazoletransferase (Caldanaerobacter subterraneus subsp. tengcongensis (strain DSM 15242 / JCM 11007 / NBRC 100824 / MB4) (Thermoanaerobacter tengcongensis)).